The primary structure comprises 460 residues: EPD1-interacting receptor-like cytoplasmic serine/threonine-protein kinase 5D (460 aa).

Residues 83-364 (FSSANFLGEG…DVVNILEPLL (282 aa)) enclose the Protein kinase domain. ATP contacts are provided by residues 89 to 97 (LGEGGFGPV) and Lys-118. Residues Tyr-163 and Tyr-165 each carry the phosphotyrosine modification. The active-site Proton acceptor is Asp-213.

Belongs to the protein kinase superfamily. Ser/Thr protein kinase family. In terms of assembly, interacts with the V.dahliae elicitor EPD1 (AC G2WWH6). Phosphorylated at Tyr-163 and Tyr-165 in the presence of pathogen-associated molecular patterns (PAMPs); this triggers the expression of pathogenesis-related genes. In terms of tissue distribution, mostly expressed in roots and, to a lesser extent, in leaves.

It is found in the cell membrane. It carries out the reaction L-seryl-[protein] + ATP = O-phospho-L-seryl-[protein] + ADP + H(+). The enzyme catalyses L-threonyl-[protein] + ATP = O-phospho-L-threonyl-[protein] + ADP + H(+). Required for pathogen-associated molecular pattern (PAMP, e.g. chitin and flg22)-triggered immunity (PTI) involving reactive oxygen species (ROS) accumulation and triggering plant defense, including defense-related gene expression (e.g. PR1 and LOX). Ensures specific recognition of the EPD1 effector of Verticillium dahliae, resulting in a hypersensitive response known as effector-triggered immunity (ETI), characterized by the activation of programmed cell death to limit infection by the pathogen. Priming plants with the incompatible pathogen V.dahliae leads to an increased resistance to compatible pathogens, as a result of systemic acquired resistance (SAR). This is EPD1-interacting receptor-like cytoplasmic serine/threonine-protein kinase 5D from Gossypium barbadense (Sea Island cotton).